The sequence spans 74 residues: UPF0352 protein PM1884 (74 aa).

This sequence belongs to the UPF0352 family.

This is UPF0352 protein PM1884 from Pasteurella multocida (strain Pm70).